A 358-amino-acid polypeptide reads, in one-letter code: 3-isopropylmalate dehydrogenase (358 aa).

Position 77-90 (77-90 (GEKWDSLPRELRPE)) interacts with NAD(+). Substrate is bound by residues Arg-97, Arg-107, Arg-135, and Asp-220. Positions 220, 244, and 248 each coordinate Mg(2+). 277-289 (GSAPDIAGQGIAN) lines the NAD(+) pocket.

Belongs to the isocitrate and isopropylmalate dehydrogenases family. LeuB type 1 subfamily. In terms of assembly, homodimer. Mg(2+) is required as a cofactor. The cofactor is Mn(2+).

The protein localises to the cytoplasm. The catalysed reaction is (2R,3S)-3-isopropylmalate + NAD(+) = 4-methyl-2-oxopentanoate + CO2 + NADH. It participates in amino-acid biosynthesis; L-leucine biosynthesis; L-leucine from 3-methyl-2-oxobutanoate: step 3/4. Functionally, catalyzes the oxidation of 3-carboxy-2-hydroxy-4-methylpentanoate (3-isopropylmalate) to 3-carboxy-4-methyl-2-oxopentanoate. The product decarboxylates to 4-methyl-2 oxopentanoate. The chain is 3-isopropylmalate dehydrogenase from Wolinella succinogenes (strain ATCC 29543 / DSM 1740 / CCUG 13145 / JCM 31913 / LMG 7466 / NCTC 11488 / FDC 602W) (Vibrio succinogenes).